Here is a 326-residue protein sequence, read N- to C-terminus: Pyruvate dehydrogenase E1 component subunit beta (326 aa).

Residue Glu60 participates in thiamine diphosphate binding. Ile113, Ala161, Ile162, and Asn166 together coordinate K(+).

In terms of assembly, heterodimer of an alpha and a beta chain. Requires thiamine diphosphate as cofactor.

The protein localises to the plastid. It is found in the chloroplast. The catalysed reaction is N(6)-[(R)-lipoyl]-L-lysyl-[protein] + pyruvate + H(+) = N(6)-[(R)-S(8)-acetyldihydrolipoyl]-L-lysyl-[protein] + CO2. Its function is as follows. The pyruvate dehydrogenase complex catalyzes the overall conversion of pyruvate to acetyl-CoA and CO(2). It contains multiple copies of three enzymatic components: pyruvate dehydrogenase (E1), dihydrolipoamide acetyltransferase (E2) and lipoamide dehydrogenase (E3). The polypeptide is Pyruvate dehydrogenase E1 component subunit beta (pdhB) (Chaetosphaeridium globosum (Charophycean green alga)).